Reading from the N-terminus, the 472-residue chain is Chitobiosyldiphosphodolichol beta-mannosyltransferase (472 aa).

The Lumenal segment spans residues 1–20; sequence MEEFQFIKYKGFDHVFKYSG. The chain crosses the membrane as a helical span at residues 21-41; sequence PWLWWLVGFYLCLPILAYTLL. Over 42–118 the chain is Cytoplasmic; the sequence is PYLTMNGTIS…PITVTKNTSN (77 aa). The helical intramembrane region spans 119–139; the sequence is LPFILFAAKKMVVQFFQLLKL. Topologically, residues 140-472 are cytoplasmic; the sequence is LSDFRGTDYV…MGKRFEYSTD (333 aa).

Belongs to the glycosyltransferase group 1 family.

It is found in the endoplasmic reticulum membrane. It carries out the reaction an N,N'-diacetylchitobiosyl-diphospho-di-trans,poly-cis-dolichol + GDP-alpha-D-mannose = a beta-D-Man-(1-&gt;4)-beta-D-GlcNAc-(1-&gt;4)-alpha-D-GlcNAc-diphospho-di-trans,poly-cis-dolichol + GDP + H(+). It participates in protein modification; protein glycosylation. In terms of biological role, participates in the formation of the lipid-linked precursor oligosaccharide for N-glycosylation. Involved in assembling the dolichol-pyrophosphate-GlcNAc(2)-Man(5) intermediate on the cytoplasmic surface of the ER. This is Chitobiosyldiphosphodolichol beta-mannosyltransferase (ALG1) from Debaryomyces hansenii (strain ATCC 36239 / CBS 767 / BCRC 21394 / JCM 1990 / NBRC 0083 / IGC 2968) (Yeast).